The primary structure comprises 199 residues: Adenylate kinase (199 aa).

Residue 10–15 (GAGKGT) participates in ATP binding. The tract at residues 30-59 (STGDMLRAAVAARTPVGLQAKSIMESGGLV) is NMP. AMP is bound by residues Thr-31, Arg-36, 57–59 (GLV), 85–88 (GFPR), and Gln-92. The LID stretch occupies residues 126 to 142 (KRAAETLARGEAVRKDD). Arg-127 is an ATP binding site. 2 residues coordinate AMP: Arg-139 and Arg-150. Ala-178 provides a ligand contact to ATP.

Belongs to the adenylate kinase family. In terms of assembly, monomer.

The protein localises to the cytoplasm. It carries out the reaction AMP + ATP = 2 ADP. Its pathway is purine metabolism; AMP biosynthesis via salvage pathway; AMP from ADP: step 1/1. Catalyzes the reversible transfer of the terminal phosphate group between ATP and AMP. Plays an important role in cellular energy homeostasis and in adenine nucleotide metabolism. The protein is Adenylate kinase of Methylobacterium nodulans (strain LMG 21967 / CNCM I-2342 / ORS 2060).